Reading from the N-terminus, the 341-residue chain is Methionine import ATP-binding protein MetN 1 (341 aa).

The ABC transporter domain occupies 2 to 241; the sequence is IEFRQVSKSF…PKTTIAQNFV (240 aa). 38 to 45 serves as a coordination point for ATP; sequence GYSGAGKS.

The protein belongs to the ABC transporter superfamily. Methionine importer (TC 3.A.1.24) family. In terms of assembly, the complex is composed of two ATP-binding proteins (MetN), two transmembrane proteins (MetI) and a solute-binding protein (MetQ).

The protein localises to the cell membrane. The catalysed reaction is L-methionine(out) + ATP + H2O = L-methionine(in) + ADP + phosphate + H(+). The enzyme catalyses D-methionine(out) + ATP + H2O = D-methionine(in) + ADP + phosphate + H(+). Functionally, part of the ABC transporter complex MetNIQ involved in methionine import. Responsible for energy coupling to the transport system. The sequence is that of Methionine import ATP-binding protein MetN 1 from Staphylococcus aureus (strain Mu50 / ATCC 700699).